Consider the following 869-residue polypeptide: Dimethylglycine dehydrogenase, mitochondrial (869 aa).

The N-terminal 43 residues, 1–43, are a transit peptide targeting the mitochondrion; that stretch reads MLRPGALRLRGLALRGSPRRPSSAGLREGQESPASPPEWKDRA. Residues 14 to 39 are disordered; sequence LRGSPRRPSSAGLREGQESPASPPEW. FAD is bound by residues 52–53, 73–74, and 80–88; these read CV, EK, and GSTWHAAGL. His-84 is subject to Tele-8alpha-FAD histidine. Lys-107 carries the post-translational modification N6-acetyllysine. At Lys-141 the chain carries N6-acetyllysine; alternate. An N6-succinyllysine; alternate modification is found at Lys-141. Lys-161 is subject to N6-acetyllysine. An FAD-binding site is contributed by Val-212. An N6-acetyllysine modification is found at Lys-216. An FAD-binding site is contributed by Trp-244. N6-succinyllysine occurs at positions 310 and 312. N6-acetyllysine occurs at positions 328 and 353. 390–395 provides a ligand contact to FAD; the sequence is FGYGII. N6-acetyllysine; alternate is present on residues Lys-427, Lys-469, and Lys-516. N6-succinyllysine; alternate is present on residues Lys-427, Lys-469, and Lys-516. 573 to 575 lines the (6S)-5,6,7,8-tetrahydrofolate pocket; sequence ELT. An N6-acetyllysine; alternate modification is found at Lys-648. Lys-648 carries the N6-succinyllysine; alternate modification. (6S)-5,6,7,8-tetrahydrofolate is bound by residues Tyr-669, 676-678, and Tyr-737; that span reads ELY. Position 757 is an N6-acetyllysine (Lys-757). Lys-786 bears the N6-acetyllysine; alternate mark. Residue Lys-786 is modified to N6-succinyllysine; alternate. Lys-788 carries the N6-succinyllysine modification.

Belongs to the GcvT family. FAD serves as cofactor.

It localises to the mitochondrion. The catalysed reaction is (6S)-5,6,7,8-tetrahydrofolyl-(gamma-L-Glu)(n) + N,N-dimethylglycine + oxidized [electron-transfer flavoprotein] + H(+) = (6R)-5,10-methylenetetrahydrofolyl-(gamma-L-Glu)(n) + sarcosine + reduced [electron-transfer flavoprotein]. The protein operates within amine and polyamine degradation; betaine degradation; sarcosine from betaine: step 2/2. In terms of biological role, catalyzes the demethylation of N,N-dimethylglycine to sarcosine. Also has activity with sarcosine in vitro. The protein is Dimethylglycine dehydrogenase, mitochondrial (Dmgdh) of Mus musculus (Mouse).